A 600-amino-acid chain; its full sequence is Probable pectin methyltransferase QUA3 (600 aa).

Topologically, residues 1–18 are cytoplasmic; it reads MGHVNLPASKRGNPRQWR. Residues 19–39 form a helical; Signal-anchor for type II membrane protein membrane-spanning segment; sequence LLDIVTAAFFGIVLLFFILLF. At 40-600 the chain is on the lumenal side; that stretch reads TPLGDSMAAS…SLWKLPSNSH (561 aa). Asparagine 283 is a glycosylation site (N-linked (GlcNAc...) asparagine).

Belongs to the methyltransferase superfamily. In terms of tissue distribution, highly expressed and abundant in suspension-cultured cells, but low levels in seedlings.

Its subcellular location is the golgi apparatus membrane. It functions in the pathway glycan metabolism; pectin biosynthesis. In terms of biological role, S-adenosyl-L-methionine (SAM)-dependent methyltransferase (MTase) which mediates the methylesterification of the pectin homogalacturonan (HG) and thus regulates cell wall biosynthesis, at least in suspension-cultured cells. This is Probable pectin methyltransferase QUA3 from Arabidopsis thaliana (Mouse-ear cress).